We begin with the raw amino-acid sequence, 439 residues long: Serine--tRNA ligase (439 aa).

Residue 237–239 (TAE) participates in L-serine binding. 268–270 (RAE) contributes to the ATP binding site. Residue E291 participates in L-serine binding. An ATP-binding site is contributed by 362 to 365 (EISS). Residue S397 participates in L-serine binding.

It belongs to the class-II aminoacyl-tRNA synthetase family. Type-1 seryl-tRNA synthetase subfamily. Homodimer. The tRNA molecule binds across the dimer.

The protein resides in the cytoplasm. The enzyme catalyses tRNA(Ser) + L-serine + ATP = L-seryl-tRNA(Ser) + AMP + diphosphate + H(+). It catalyses the reaction tRNA(Sec) + L-serine + ATP = L-seryl-tRNA(Sec) + AMP + diphosphate + H(+). It participates in aminoacyl-tRNA biosynthesis; selenocysteinyl-tRNA(Sec) biosynthesis; L-seryl-tRNA(Sec) from L-serine and tRNA(Sec): step 1/1. Its function is as follows. Catalyzes the attachment of serine to tRNA(Ser). Is also able to aminoacylate tRNA(Sec) with serine, to form the misacylated tRNA L-seryl-tRNA(Sec), which will be further converted into selenocysteinyl-tRNA(Sec). This Afipia carboxidovorans (strain ATCC 49405 / DSM 1227 / KCTC 32145 / OM5) (Oligotropha carboxidovorans) protein is Serine--tRNA ligase.